The sequence spans 300 residues: F-box/LRR-repeat protein 15 (300 aa).

N-acetylmethionine is present on M1. An F-box domain is found at 19 to 66 (FLDLPWEDVLLPHVLNRVPLRQLLRLQRVSRAFRSLVQLHLAGLRRFD). An interaction with SMURF1 region spans residues 113 to 269 (NPQLRSVALG…ESSLSRLRKR (157 aa)). LRR repeat units lie at residues 141–162 (RLQR…RGLA), 167–188 (ALEE…VYLA), 194–215 (GLRS…QELA), 220–241 (ELHH…RTLA), and 246–267 (VLRS…SRLR).

Belongs to the FBXL15 family. Part of the SCF (SKP1-CUL1-F-box) E3 ubiquitin-protein ligase complex SCF(FBXL15) composed of CUL1, SKP1, RBX1 and FBXL15.

The protein localises to the cytoplasm. It functions in the pathway protein modification; protein ubiquitination. Its function is as follows. Substrate recognition component of a SCF (SKP1-CUL1-F-box protein) E3 ubiquitin-protein ligase complex which mediates the ubiquitination and subsequent proteasomal degradation of SMURF1, thereby acting as a positive regulator of the BMP signaling pathway. Required for dorsal/ventral pattern formation and bone mass maintenance. Also mediates ubiquitination of SMURF2 and WWP2. The polypeptide is F-box/LRR-repeat protein 15 (FBXL15) (Homo sapiens (Human)).